We begin with the raw amino-acid sequence, 232 residues long: tRNA1(Val) (adenine(37)-N6)-methyltransferase (232 aa).

This sequence belongs to the methyltransferase superfamily. tRNA (adenine-N(6)-)-methyltransferase family.

The protein resides in the cytoplasm. It carries out the reaction adenosine(37) in tRNA1(Val) + S-adenosyl-L-methionine = N(6)-methyladenosine(37) in tRNA1(Val) + S-adenosyl-L-homocysteine + H(+). In terms of biological role, specifically methylates the adenine in position 37 of tRNA(1)(Val) (anticodon cmo5UAC). The polypeptide is tRNA1(Val) (adenine(37)-N6)-methyltransferase (Haemophilus influenzae (strain ATCC 51907 / DSM 11121 / KW20 / Rd)).